The primary structure comprises 474 residues: Hydrogenobyrinate a,c-diamide synthase (474 aa).

Residues Val-269–Gln-459 enclose the GATase cobBQ-type domain. Cys-352 serves as the catalytic Nucleophile.

The protein belongs to the CobB/CbiA family. Requires Mg(2+) as cofactor.

It catalyses the reaction hydrogenobyrinate + 2 L-glutamine + 2 ATP + 2 H2O = hydrogenobyrinate a,c-diamide + 2 L-glutamate + 2 ADP + 2 phosphate + 2 H(+). The protein operates within cofactor biosynthesis; adenosylcobalamin biosynthesis; cob(II)yrinate a,c-diamide from precorrin-2 (aerobic route): step 9/10. Catalyzes the ATP-dependent amidation of the two carboxylate groups at positions a and c of hydrogenobyrinate, using either L-glutamine or ammonia as the nitrogen source. This is Hydrogenobyrinate a,c-diamide synthase from Thermobifida fusca (strain YX).